Reading from the N-terminus, the 107-residue chain is Sulmotoxin 1 (107 aa).

An N-terminal signal peptide occupies residues 1-19; sequence MKTLLLALAVVVLVCLGSA. The propeptide occupies 20–34; the sequence is NELGLGRQRVDRRRR. 5 disulfides stabilise this stretch: Cys-44–Cys-68, Cys-47–Cys-55, Cys-61–Cys-83, Cys-87–Cys-98, and Cys-99–Cys-104.

The protein belongs to the three-finger toxin family. Ancestral subfamily. Boigatoxin sub-subfamily. As to quaternary structure, monomer. In terms of tissue distribution, expressed by the venom gland.

The protein resides in the secreted. In terms of biological role, mammal-specific neurotoxin (tested on mice). Not toxic to lizards (tested on geckos). This is Sulmotoxin 1 from Spilotes sulphureus (Amazon puffing snake).